Reading from the N-terminus, the 547-residue chain is Chaperonin GroEL (547 aa).

ATP-binding positions include 30–33, K51, 87–91, G415, 478–480, and D494; these read TLGP, DGTTT, and NAA.

This sequence belongs to the chaperonin (HSP60) family. Forms a cylinder of 14 subunits composed of two heptameric rings stacked back-to-back. Interacts with the co-chaperonin GroES.

The protein resides in the cytoplasm. The catalysed reaction is ATP + H2O + a folded polypeptide = ADP + phosphate + an unfolded polypeptide.. Functionally, together with its co-chaperonin GroES, plays an essential role in assisting protein folding. The GroEL-GroES system forms a nano-cage that allows encapsulation of the non-native substrate proteins and provides a physical environment optimized to promote and accelerate protein folding. The protein is Chaperonin GroEL of Geobacter sp. (strain M21).